A 561-amino-acid polypeptide reads, in one-letter code: Acyl-CoA ligase frbB (561 aa).

Residues 213–221 (TSGTSGAQK), 354–359 (PGWGLT), Asp-437, Arg-456, and Lys-551 contribute to the ATP site. The segment at 284–354 (DLKRVLGSIA…TLRPKWHLQP (71 aa)) is SBD1. The tract at residues 355-417 (GWGLTEGGGA…MKSPSVIAGY (63 aa)) is SBD2.

It belongs to the ATP-dependent AMP-binding enzyme family.

The protein operates within antifungal biosynthesis. Its function is as follows. Acyl-CoA ligase; part of the gene cluster that mediates the biosynthesis of the antifungal antibiotic FR901469, an inhibitor of beta-1,3-glucansynthase, exerting antifungal activity against the pathogenes Candida albicans and Aspergillus fumigatus. FR901469 is a cyclic depsipeptide containing 12 amino acid residues and a fatty acid chain. The NRPS frbI contains 12 modules responsible for the formation of the depsipeptide backbone which is denoted as Acyl-Thr-Ala-Tyr-Val-4OHPro-Thr-Thr-3OHPro-threo3OHGln-Gly-Thr-Orn-OH (C71H116N14O23). The PKS frbB is probably involved in the production of the hydrocarbon chain, and the acyl-CoA ligase frbC might be involved in the transport of the chain to the peptide ptoduct of frbI. Because FR901469 contains 3 hydroxylated amino acid residues, the 3 oxygenases frbA, frbH, and frbJ might be participating in amino acid hydroxylation. As no thioesterase domains were detected in frbI or frbB, the thioesterases frbD and frbE may instead release and cyclize the products of the NRPS and PKS, respectively. This is Acyl-CoA ligase frbB from Dothideomycetidae sp. (strain 11243) (Fungal sp. (strain No.11243)).